We begin with the raw amino-acid sequence, 1157 residues long: MGKLRRRYNIKGRQQAGPGPSKGPPEPPPVQLELEDKDTLKGVDASNALVLPGKKKKKTKAPPLSKKEKKPLTKKEKKVLQKILEQKEKKSQRAEMLQKLSEVQASEAEMRLFYTTSKLGTGNRMYHTKEKADEVVAPGQEKISSLSGAHRKRRRWPSAEEEEEEEEESESELEEESELDEDPAAEPAEAGVGTTVAPLPPAPAPSSQPVPAGMTVPPPPAAAPPLPRALAKPAVFIPVNRSPEMQEERLKLPILSEEQVIMEAVAEHPIVIVCGETGSGKTTQVPQFLYEAGFSSEDSIIGVTEPRRVAAVAMSQRVAKEMNLSQRVVSYQIRYEGNVTEETRIKFMTDGVLLKEIQKDFLLLRYKVVIIDEAHERSVYTDILIGLLSRIVTLRAKRNLPLKLLIMSATLRVEDFTQNPRLFAKPPPVIKVESRQFPVTVHFNKRTPLEDYSGECFRKVCKIHRMLPAGGILVFLTGQAEVHALCRRLRKAFPPSRARPQEKDDDQKDSVEEMRKFKKSRARAKKARAEVLPQINLDHYSVLPAGEGDEDREAEVDEEEGALDSDLDLDLGDGGQDGGEQPDASLPLHVLPLYSLLAPEKQAQVFKPPPEGTRLCVVATNVAETSLTIPGIKYVVDCGKVKKRYYDRVTGVSSFRVTWVSQASADQRAGRAGRTEPGHCYRLYSSAVFGDFEQFPPPEITRRPVEDLILQMKALNVEKVINFPFPTPPSVEALLAAEELLIALGALQPPQKAERVKQLQENRLSCPITALGRTMATFPVAPRYAKMLALSRQHGCLPYAITIVASMTVRELFEELDRPAASDEELTRLKSKRARVAQMKRTWAGQGASLKLGDLMVLLGAVGACEYASCTPQFCEANGLRYKAMMEIRRLRGQLTTAVNAVCPEAELFVDPKMQPPTESQVTYLRQIVTAGLGDHLARRVQSEEMLEDKWRNAYKTPLLDDPVFIHPSSVLFKELPEFVVYQEIVETTKMYMKGVSSVEVQWIPALLPSYCQFDKPLEEPAPTYCPERGRVLCHRASVFYRVGWPLPAIEVDFPEGIDRYKHFARFLLEGQVFRKLASYRSCLLSSPGTMLKTWARLQPRTESLLRALVAEKADCHEALLAAWKKNPKYLLAEYCEWLPQAMHPDIEKAWPPTTVH.

Residues 1–10 (MGKLRRRYNI) are compositionally biased toward basic residues. Disordered stretches follow at residues 1 to 77 (MGKL…KKEK) and 116 to 225 (TSKL…AAPP). Over residues 21–30 (SKGPPEPPPV) the composition is skewed to pro residues. The segment covering 159 to 184 (AEEEEEEEEESESELEEESELDEDPA) has biased composition (acidic residues). 2 stretches are compositionally biased toward pro residues: residues 198-208 (PLPPAPAPSSQ) and 216-225 (VPPPPAAAPP). Residues 262–429 (MEAVAEHPIV…PRLFAKPPPV (168 aa)) enclose the Helicase ATP-binding domain. Residue 275-282 (GETGSGKT) coordinates ATP. The DEAH box motif lies at 372 to 375 (DEAH). The region spanning 459 to 716 (KVCKIHRMLP…DLILQMKALN (258 aa)) is the Helicase C-terminal domain. 2 disordered regions span residues 494-523 (PPSRARPQEKDDDQKDSVEEMRKFKKSRAR) and 542-584 (VLPA…QPDA). The span at 499 to 515 (RPQEKDDDQKDSVEEMR) shows a compositional bias: basic and acidic residues. A compositionally biased stretch (acidic residues) spans 547-571 (EGDEDREAEVDEEEGALDSDLDLDL).

This sequence belongs to the DEAD box helicase family. DEAH subfamily. Part of the small subunit (SSU) processome, composed of more than 70 proteins and the RNA chaperone small nucleolar RNA (snoRNA) U3. Interacts with UTP14A. As to expression, expressed in the fallopian tube, ovary, uterus and testis. Also expressed in the brain.

The protein localises to the nucleus. It localises to the nucleolus. It is found in the cytoplasm. The protein resides in the nucleus membrane. It carries out the reaction ATP + H2O = ADP + phosphate + H(+). Functionally, ATP-binding RNA helicase that plays a role in maturation of the small ribosomal subunit in ribosome biogenesis. Required for the release of the U3 snoRNP from pre-ribosomal particles. Part of the small subunit (SSU) processome, first precursor of the small eukaryotic ribosomal subunit. During the assembly of the SSU processome in the nucleolus, many ribosome biogenesis factors, an RNA chaperone and ribosomal proteins associate with the nascent pre-rRNA and work in concert to generate RNA folding, modifications, rearrangements and cleavage as well as targeted degradation of pre-ribosomal RNA by the RNA exosome. Plays a role in early testis development. Probably also plays a role in brain development. The chain is Probable ATP-dependent RNA helicase DHX37 from Homo sapiens (Human).